The primary structure comprises 267 residues: 5'-nucleotidase SurE (267 aa).

D9, D10, S40, and N97 together coordinate a divalent metal cation.

Belongs to the SurE nucleotidase family. A divalent metal cation is required as a cofactor.

Its subcellular location is the cytoplasm. It catalyses the reaction a ribonucleoside 5'-phosphate + H2O = a ribonucleoside + phosphate. Its function is as follows. Nucleotidase that shows phosphatase activity on nucleoside 5'-monophosphates. In Helicobacter pylori (strain P12), this protein is 5'-nucleotidase SurE.